The chain runs to 546 residues: Probable ATP-dependent RNA helicase DDX56 (546 aa).

The Q motif motif lies at 7 to 35 (LGFEHMGLDHRLLQAVTDLGWSRPTLIQE). The Helicase ATP-binding domain maps to 38-218 (IPLALEGKDL…ELVLHNPVTL (181 aa)). Residue 51 to 58 (ARTGSGKT) coordinates ATP. Ser-126 carries the post-translational modification Phosphoserine. Position 141 is a phosphothreonine (Thr-141). Positions 166-169 (DEAD) match the DEAD box motif. The region spanning 230 to 424 (QLQQFQVVCE…PYQFHMEEIE (195 aa)) is the Helicase C-terminal domain. Disordered stretches follow at residues 323–342 (PVKG…SDPE) and 504–546 (LVHP…AAPS). Positions 505–524 (VHPHKKRKKPLASKKAKKAK) are enriched in basic residues. At Ser-531 the chain carries Phosphoserine.

The protein belongs to the DEAD box helicase family. DDX56/DBP9 subfamily. As to quaternary structure, may form homooligomeric complexes. Interacts with IRF3. Interacts with OCT4 and POU5F1.

The protein resides in the nucleus. It localises to the nucleolus. The catalysed reaction is ATP + H2O = ADP + phosphate + H(+). Functionally, nucleolar RNA helicase that plays a role in various biological processes including innate immunity, ribosome biogenesis or nucleolus organization. Plays an essential role in maintaining nucleolar integrity in planarian stem cells. Maintains embryonic stem cells proliferation by conventional regulation of ribosome assembly and interaction with OCT4 and POU5F1 complex. Regulates antiviral innate immunity by inhibiting the virus-triggered signaling nuclear translocation of IRF3. Mechanistically, acts by disrupting the interaction between IRF3 and importin IPO5. May play a role in later stages of the processing of the pre-ribosomal particles leading to mature 60S ribosomal subunits. Has intrinsic ATPase activity. The protein is Probable ATP-dependent RNA helicase DDX56 (DDX56) of Bos taurus (Bovine).